The primary structure comprises 303 residues: Large ribosomal subunit protein uL1m (303 aa).

Belongs to the universal ribosomal protein uL1 family. In terms of assembly, component of the mitochondrial large ribosomal subunit (mt-LSU). Mature N.crassa 74S mitochondrial ribosomes consist of a small (37S) and a large (54S) subunit. The 37S small subunit contains a 16S ribosomal RNA (16S mt-rRNA) and 32 different proteins. The 54S large subunit contains a 23S rRNA (23S mt-rRNA) and 42 different proteins.

Its subcellular location is the mitochondrion. Its function is as follows. Component of the mitochondrial ribosome (mitoribosome), a dedicated translation machinery responsible for the synthesis of mitochondrial genome-encoded proteins, including at least some of the essential transmembrane subunits of the mitochondrial respiratory chain. The mitoribosomes are attached to the mitochondrial inner membrane and translation products are cotranslationally integrated into the membrane. The sequence is that of Large ribosomal subunit protein uL1m (mrpl1) from Neurospora crassa (strain ATCC 24698 / 74-OR23-1A / CBS 708.71 / DSM 1257 / FGSC 987).